The primary structure comprises 143 residues: Ribonuclease P protein component (143 aa).

The disordered stretch occupies residues R111–P143.

Belongs to the RnpA family. In terms of assembly, consists of a catalytic RNA component (M1 or rnpB) and a protein subunit.

It catalyses the reaction Endonucleolytic cleavage of RNA, removing 5'-extranucleotides from tRNA precursor.. RNaseP catalyzes the removal of the 5'-leader sequence from pre-tRNA to produce the mature 5'-terminus. It can also cleave other RNA substrates such as 4.5S RNA. The protein component plays an auxiliary but essential role in vivo by binding to the 5'-leader sequence and broadening the substrate specificity of the ribozyme. This is Ribonuclease P protein component from Deinococcus geothermalis (strain DSM 11300 / CIP 105573 / AG-3a).